Here is a 611-residue protein sequence, read N- to C-terminus: Sensor histidine kinase WalK (611 aa).

Topologically, residues 1–13 (MNKVGFFRSIQFK) are cytoplasmic. A helical transmembrane segment spans residues 14-34 (ITLIYVLLIIIAMQIIGVYFV). Residues 35 to 182 (NQVEKSLISS…VFNQMKTINT (148 aa)) lie on the Extracellular side of the membrane. The chain crosses the membrane as a helical span at residues 183–203 (ILASGTGLALVLTALLGIFLA). The region spanning 204-256 (RTITHPLSDMRKQAMELAKGNFSRKVKKYGHDEIGQLATTFNHLTRELEDAQA) is the HAMP domain. Over 204-611 (RTITHPLSDM…EEQEDDWDEA (408 aa)) the chain is Cytoplasmic. One can recognise a PAS domain in the interval 263 to 324 (RKLASVIAYM…QENYTFEDLV (62 aa)). Residues 325–379 (EQQDSMLLEIERDDELTVLRVNFSVIQREHGKIDGLIAVIYDVTEQEKMDQERRE) enclose the PAC domain. In terms of domain architecture, Histidine kinase spans 383–602 (NVSHELRTPL…TITFTLPYKE (220 aa)). H386 bears the Phosphohistidine; by autocatalysis mark.

As to quaternary structure, homodimer. Interacts with YycH and YycI. In terms of processing, autophosphorylated.

The protein resides in the cell membrane. The catalysed reaction is ATP + protein L-histidine = ADP + protein N-phospho-L-histidine.. Functionally, member of the two-component regulatory system WalK/WalR involved in the regulation of the ftsAZ operon, the yocH and ykvT, cwlO, lytE, ydjM, yjeA, yoeB genes and the tagAB and tagDEF operons. Phosphorylates WalR. The protein is Sensor histidine kinase WalK of Bacillus subtilis (strain 168).